The sequence spans 165 residues: MPRVALYPGSFDPVTNGHLDVVRHAVALCDRLIVAVGVHPGKTPVFSADDRLAMARSVFEPVAVEAGCAFDCVTYDDLTVAAAHKVGATILVRGLRDGTDLDYEMQIAGMNETMAPDVHTVFVPASPGVRPITATLVRQIATMGGDVSPFVPQLVASRLRTKFAG.

Serine 10 serves as a coordination point for substrate. Residues 10–11 (SF) and histidine 18 each bind ATP. Substrate is bound by residues lysine 42, threonine 79, and arginine 93. Residues 94–96 (GLR), glutamate 104, and 129–135 (VRPITAT) contribute to the ATP site.

The protein belongs to the bacterial CoaD family. As to quaternary structure, homohexamer. It depends on Mg(2+) as a cofactor.

It is found in the cytoplasm. It catalyses the reaction (R)-4'-phosphopantetheine + ATP + H(+) = 3'-dephospho-CoA + diphosphate. Its pathway is cofactor biosynthesis; coenzyme A biosynthesis; CoA from (R)-pantothenate: step 4/5. Reversibly transfers an adenylyl group from ATP to 4'-phosphopantetheine, yielding dephospho-CoA (dPCoA) and pyrophosphate. This Nitrobacter winogradskyi (strain ATCC 25391 / DSM 10237 / CIP 104748 / NCIMB 11846 / Nb-255) protein is Phosphopantetheine adenylyltransferase.